The chain runs to 370 residues: DNA replication and repair protein RecF (370 aa).

ATP is bound at residue 30-37; that stretch reads GENAQGKT.

This sequence belongs to the RecF family. Recruited to foci following DNA damage; probably interacts with RecO.

The protein localises to the cytoplasm. It localises to the nucleoid. The RecF protein is involved in DNA metabolism; it is required for DNA replication and normal SOS inducibility. RecF binds preferentially to single-stranded, linear DNA. It also seems to bind ATP. Is recruited to repair centers, foci that are the site of double-strand DNA break(s) after RecN and RecO; recruitment may depend on RecO. A positive modulator of RecA. This chain is DNA replication and repair protein RecF, found in Bacillus subtilis (strain 168).